Here is a 98-residue protein sequence, read N- to C-terminus: Citrate lyase acyl carrier protein (98 aa).

S14 carries the post-translational modification O-(phosphoribosyl dephospho-coenzyme A)serine.

Belongs to the CitD family. Oligomer with a subunit composition of (alpha,beta,gamma)6.

It is found in the cytoplasm. Covalent carrier of the coenzyme of citrate lyase. The chain is Citrate lyase acyl carrier protein from Albidiferax ferrireducens (strain ATCC BAA-621 / DSM 15236 / T118) (Rhodoferax ferrireducens).